A 324-amino-acid chain; its full sequence is Cytosolic sulfotransferase 13 (324 aa).

76–81 (KSGTTW) is a 3'-phosphoadenylyl sulfate binding site. H134 acts as the Proton acceptor in catalysis. 3'-phosphoadenylyl sulfate contacts are provided by residues R156, S164, Y222, and 288 to 290 (RKG).

This sequence belongs to the sulfotransferase 1 family.

It is found in the cytoplasm. Sulfotransferase that utilizes 3'-phospho-5'-adenylyl sulfate (PAPS) as sulfonate donor. The polypeptide is Cytosolic sulfotransferase 13 (SOT13) (Arabidopsis thaliana (Mouse-ear cress)).